The chain runs to 132 residues: MCDAFVGTWKLVSSENFDDYMKEVGVGFATRKVAGMAKPNMIISVNGDLVTIRSESTFKNTEISFKLGVEFDEITADDRKVKSIITLDGGALVQVQKWDGKSTTIKRKRDGDKLVVECVMKGVTSTRVYERA.

Residue C2 is modified to N-acetylcysteine. S13 carries the phosphoserine modification. Y20 is modified (phosphotyrosine; by Tyr-kinases). The Nuclear localization signal motif lies at 22–32; sequence KEVGVGFATRK. 127–129 lines the a fatty acid pocket; that stretch reads RVY.

This sequence belongs to the calycin superfamily. Fatty-acid binding protein (FABP) family. Monomer. Homodimer. Interacts with PPARG.

It is found in the cytoplasm. The protein localises to the nucleus. Its function is as follows. Lipid transport protein in adipocytes. Binds both long chain fatty acids and retinoic acid. Delivers long-chain fatty acids and retinoic acid to their cognate receptors in the nucleus. The protein is Fatty acid-binding protein, adipocyte (Fabp4) of Mus musculus (Mouse).